Consider the following 119-residue polypeptide: Large ribosomal subunit protein uL22 (119 aa).

This sequence belongs to the universal ribosomal protein uL22 family. As to quaternary structure, part of the 50S ribosomal subunit.

In terms of biological role, this protein binds specifically to 23S rRNA; its binding is stimulated by other ribosomal proteins, e.g. L4, L17, and L20. It is important during the early stages of 50S assembly. It makes multiple contacts with different domains of the 23S rRNA in the assembled 50S subunit and ribosome. Functionally, the globular domain of the protein is located near the polypeptide exit tunnel on the outside of the subunit, while an extended beta-hairpin is found that lines the wall of the exit tunnel in the center of the 70S ribosome. This is Large ribosomal subunit protein uL22 from Rickettsia rickettsii (strain Iowa).